Here is a 391-residue protein sequence, read N- to C-terminus: Tryptophan synthase beta chain (391 aa).

Lys-84 is subject to N6-(pyridoxal phosphate)lysine.

This sequence belongs to the TrpB family. Tetramer of two alpha and two beta chains. The cofactor is pyridoxal 5'-phosphate.

It carries out the reaction (1S,2R)-1-C-(indol-3-yl)glycerol 3-phosphate + L-serine = D-glyceraldehyde 3-phosphate + L-tryptophan + H2O. It participates in amino-acid biosynthesis; L-tryptophan biosynthesis; L-tryptophan from chorismate: step 5/5. Functionally, the beta subunit is responsible for the synthesis of L-tryptophan from indole and L-serine. This chain is Tryptophan synthase beta chain, found in Caldanaerobacter subterraneus subsp. tengcongensis (strain DSM 15242 / JCM 11007 / NBRC 100824 / MB4) (Thermoanaerobacter tengcongensis).